The following is a 302-amino-acid chain: MKKNRLNLNGVVVINKVKDISSNKVLQQLKYLFNAQKAGHTGTLDPMATGVLPICFGRATKIAQYLLDADKEYIATIRLGIETDSGDAEGEIIAKSINIPELSAEYLETVLAKFRGDVVQIPPMYSALKYNGQPLYKLAREGKTVEVKSRNIKIYELELLEFNIDSLKIRVKCSKGTYIRSLAIDIGKTLGCGGHLIALQRTQSGPFKLSEAFRLEQLKDLSFEQKIASITNIESVFIDKPIYSLLEEEKDDLYKRGLFADKPHLDGTVRIYDVEKFVAIAEFDKGKLINKKFFDQDILISE.

The Nucleophile role is filled by Asp45.

The protein belongs to the pseudouridine synthase TruB family. Type 1 subfamily.

It carries out the reaction uridine(55) in tRNA = pseudouridine(55) in tRNA. Its function is as follows. Responsible for synthesis of pseudouridine from uracil-55 in the psi GC loop of transfer RNAs. The chain is tRNA pseudouridine synthase B from Francisella tularensis subsp. tularensis (strain FSC 198).